The following is a 570-amino-acid chain: Molecular chaperone MKKS (570 aa).

192–199 (GHIILGKS) contributes to the ATP binding site. The segment at 198-370 (KSLIVPLKGQ…FHLIPNEATI (173 aa)) is substrate-binding apical domain.

This sequence belongs to the TCP-1 chaperonin family. As to quaternary structure, component of a complex composed at least of MKKS, BBS10, BBS12, TCP1, CCT2, CCT3, CCT4, CCT5 and CCT8. Interacts with STUB1. Interacts with BBS2 (via coiled coil domain). Interacts with CCDC28B. Interacts with BBS12. Interacts with SMARCC1, a component of the SWI/SNF complexes; the interaction takes place predominantly in the cytoplasm and may modulate SMARCC1 location. Interacts with DLEC1.

It is found in the cytoplasm. Its subcellular location is the cytoskeleton. The protein localises to the microtubule organizing center. It localises to the centrosome. The protein resides in the cytosol. It is found in the nucleus. In terms of biological role, probable molecular chaperone that assists the folding of proteins upon ATP hydrolysis. Plays a role in the assembly of BBSome, a complex involved in ciliogenesis regulating transports vesicles to the cilia. May play a role in protein processing in limb, cardiac and reproductive system development. May play a role in cytokinesis. This Pongo abelii (Sumatran orangutan) protein is Molecular chaperone MKKS (MKKS).